The chain runs to 746 residues: MNKKIHSLALLVNLGIYGVAQAQEPTDTPVSHDDTIVVTAAEQNLQAPGVSTITADEIRKNPVARDVSKIIRTMPGVNLTGNSTSGQRGNNRQIDIRGMGPENTLILIDGKPVSSRNSVRQGWRGERDTRGDTSWVPPEMIERIEVLRGPAAARYGNGAAGGVVNIITKKGSGEWHGSWDAYFNAPEHKEEGATKRTNFSLTGPLGDEFSFRLYGNLDKTQADAWDINQGHQSARAGTYATTLPAGREGVINKDINGVVRWDFAPLQSLELEAGYSRQGNLYAGDTQNTNSDSYTRSKYGDETNRLYRQNYALTWNGGWDNGVTTSNWVQYEHTRNSRIPEGLAGGTEGKFNEKATQDFVDIDLDDVMLHSEVNLPIDFLVNQTLTLGTEWNQQRMKDLSSNTQALTGTNTGGAIDGVSTTDRSPYSKAEIFSLFAENNMELTDSTIVTPGLRFDHHSIVGNNWSPALNISQGLGDDFTLKMGIARAYKAPSLYQTNPNYILYSKGQGCYASAGGCYLQGNDDLKAETSINKEIGLEFKRDGWLAGVTWFRNDYRNKIEAGYVAVGQNAVGTDLYQWDNVPKAVVEGLEGSLNVPVSETVMWTNNITYMLKSENKTTGDRLSIIPEYTLNSTLSWQAREDLSMQTTFTWYGKQQPKKYNYKGQPAVGPETKEISPYSIVGLSATWDVTKNVSLTGGVDNLFDKRLWRAGNAQTTGDLAGANYIAGAGAYTYNEPGRTWYMSVNTHF.

The N-terminal stretch at 1 to 22 (MNKKIHSLALLVNLGIYGVAQA) is a signal peptide. A TonB box motif is present at residues 34–41 (DTIVVTAA). The 128-residue stretch at 42 to 169 (EQNLQAPGVS…AGGVVNIITK (128 aa)) folds into the TBDR plug domain. The segment at 76 to 96 (GVNLTGNSTSGQRGNNRQIDI) is disordered. Residues 79–93 (LTGNSTSGQRGNNRQ) show a composition bias toward polar residues. Residues 174-746 (EWHGSWDAYF…TWYMSVNTHF (573 aa)) enclose the TBDR beta-barrel domain. The TonB C-terminal box motif lies at 729 to 746 (YTYNEPGRTWYMSVNTHF).

The protein belongs to the TonB-dependent receptor family.

It localises to the cell outer membrane. Its function is as follows. This protein is involved in the initial step of iron uptake by binding ferrienterobactin (Fe-ENT), an iron chelatin siderophore that allows E.coli to extract iron from the environment. FepA also acts as a receptor for colicins B and D. This is Ferrienterobactin receptor (fepA) from Escherichia coli (strain K12).